We begin with the raw amino-acid sequence, 465 residues long: FAD-dependent monooxygenase penM (465 aa).

The helical transmembrane segment at 5–25 (QFHVIIVGGSIAGLTLAHCLH) threads the bilayer. Positions 35, 49, 108, 299, and 312 each coordinate FAD. A helical membrane pass occupies residues 435–455 (VLVLLLSALTWSCLGNMNIIM).

Belongs to the paxM FAD-dependent monooxygenase family. It depends on FAD as a cofactor.

The protein resides in the membrane. The protein operates within secondary metabolite biosynthesis. Functionally, FAD-dependent monooxygenase; part of the gene cluster that mediates the biosynthesis of the indole diterpenes penitrems. The geranylgeranyl diphosphate (GGPP) synthase penG catalyzes the first step in penitrem biosynthesis via conversion of farnesyl pyrophosphate and isopentyl pyrophosphate into geranylgeranyl pyrophosphate (GGPP). Condensation of indole-3-glycerol phosphate with GGPP by the prenyl transferase penC then forms 3-geranylgeranylindole (3-GGI). Epoxidation by the FAD-dependent monooxygenase penM leads to a epoxidized-GGI that is substrate of the terpene cyclase penB for cyclization to yield paspaline. Paspaline is subsequently converted to 13-desoxypaxilline by the cytochrome P450 monooxygenase penP, the latter being then converted to paxilline by the cytochrome P450 monooxygenase penQ. Paxilline is converted to beta-paxitriol via C-10 ketoreduction by the short-chain dehydrogenase PC-15 which can be monoprenylated at the C-20 by the indole diterpene prenyltransferase penD. A two-step elimination (acetylation and elimination) process performed by the O-acetyltransferase PC-16 and the P.simplicissimum ptmI-ortholog not yet identified in P.crustosum, leads to the production of the prenylated form of penijanthine. The FAD-linked oxidoreductase ptmO then converts the prenylated form of penijanthine into PC-M5 which is in turn transformed into PC-M4 by the aromatic dimethylallyltransferase PC-22. A series of oxidation steps involving 4 cytochrome P450 monooxygenases (PC-21, PC-05, PC-23, PC-20) and a FAD-dependent monooxygenase (PC-14) are required for the transformation of PC-M4 to penitrems A and E. Synthesis of these final products is proposed to proceed via penitrems D and C (PC-21, PC-05, PC-14) and penitrems B and F (PC-21, PC-05, PC-14, PC-23). The polypeptide is FAD-dependent monooxygenase penM (Penicillium crustosum (Blue mold fungus)).